The following is a 538-amino-acid chain: Syncytin-1 (538 aa).

The N-terminal stretch at 1–20 (MALPYHIFLFTVLLPSFTLT) is a signal peptide. Over 31-443 (SSPYQEFLWR…NIGPWGLLSQ (413 aa)) the chain is Extracellular. N-linked (GlcNAc...) asparagine glycosylation is present at Asn169. The CXXC signature appears at 186 to 189 (CWMC). Cystine bridges form between Cys186–Cys189, Cys186–Cys405, and Cys397–Cys404. N-linked (GlcNAc...) asparagine glycans are attached at residues Asn208, Asn214, Asn234, Asn242, and Asn281. A fusion peptide region spans residues 320-340 (ILPFVMGAGVLGALGTGIGSI). The immunosuppression stretch occupies residues 380-396 (LQNRRALDLLTAERGGT). The CX6CC motif lies at 397–405 (CLFLGEECC). Asn409 carries an N-linked (GlcNAc...) asparagine glycan. Residues 444–464 (WMPWILPFLGPLAAIILLLLF) form a helical membrane-spanning segment. Positions 465-484 (GPCIFNLLVNFVSSRIEAIK) are essential for the fusiogenic function. Residues 465-538 (GPCIFNLLVN…LLRPNSAGSS (74 aa)) lie on the Cytoplasmic side of the membrane. The disordered stretch occupies residues 494 to 538 (KTKNYRRSLDWPASPRSDVNDIKGIPPEEISTAQPLLRPNSAGSS).

It belongs to the gamma type-C retroviral envelope protein family. HERV class-I W env subfamily. In terms of assembly, the mature envelope protein (Env) consists of a trimer of SU-TM heterodimers attached probably by a labile interchain disulfide bond. Interacts with the C-type lectin CD209/DC-SIGN. In terms of processing, specific enzymatic cleavages in vivo yield mature proteins. Envelope glycoproteins are synthesized as an inactive precursor that is heavily N-glycosylated and processed likely by furin in the Golgi to yield the mature SU and TM proteins. The cleavage site between SU and TM requires the minimal sequence [KR]-X-[KR]-R. The CXXC motif is highly conserved across a broad range of retroviral envelope proteins. It is thought to participate in the formation of a labile disulfide bond possibly with the CX6CC motif present in the transmembrane protein.

The protein localises to the cell membrane. It is found in the virion. Its function is as follows. This endogenous retroviral envelope protein has retained its original fusogenic properties and participates in trophoblast fusion and the formation of a syncytium during placenta morphogenesis. May recognize and induce fusion through binding of SLC1A4 and SLC1A5. Functionally, endogenous envelope proteins may have kept, lost or modified their original function during evolution. Retroviral envelope proteins mediate receptor recognition and membrane fusion during early infection. The surface protein (SU) mediates receptor recognition, while the transmembrane protein (TM) acts as a class I viral fusion protein. The protein may have at least 3 conformational states: pre-fusion native state, pre-hairpin intermediate state, and post-fusion hairpin state. During viral and target cell membrane fusion, the coiled coil regions (heptad repeats) assume a trimer-of-hairpins structure, positioning the fusion peptide in close proximity to the C-terminal region of the ectodomain. The formation of this structure appears to drive apposition and subsequent fusion of membranes. In Hylobates pileatus (Pileated gibbon), this protein is Syncytin-1 (ERVW-1).